Consider the following 330-residue polypeptide: Ketol-acid reductoisomerase (NADP(+)) (330 aa).

The KARI N-terminal Rossmann domain occupies 1–181; sequence MNVYYEQDAD…GGAKAGVIET (181 aa). NADP(+)-binding positions include 24–27, arginine 47, serine 50, serine 52, and 82–85; these read YGSQ and DQYQ. Residue histidine 107 is part of the active site. Glycine 133 contacts NADP(+). The 146-residue stretch at 182-327 folds into the KARI C-terminal knotted domain; it reads TIKNETETDL…AKLRNMMSWL (146 aa). Mg(2+)-binding residues include aspartate 190, glutamate 194, glutamate 226, and glutamate 230. Position 251 (serine 251) interacts with substrate.

Belongs to the ketol-acid reductoisomerase family. Mg(2+) serves as cofactor.

The enzyme catalyses (2R)-2,3-dihydroxy-3-methylbutanoate + NADP(+) = (2S)-2-acetolactate + NADPH + H(+). It carries out the reaction (2R,3R)-2,3-dihydroxy-3-methylpentanoate + NADP(+) = (S)-2-ethyl-2-hydroxy-3-oxobutanoate + NADPH + H(+). It participates in amino-acid biosynthesis; L-isoleucine biosynthesis; L-isoleucine from 2-oxobutanoate: step 2/4. The protein operates within amino-acid biosynthesis; L-valine biosynthesis; L-valine from pyruvate: step 2/4. Its function is as follows. Involved in the biosynthesis of branched-chain amino acids (BCAA). Catalyzes an alkyl-migration followed by a ketol-acid reduction of (S)-2-acetolactate (S2AL) to yield (R)-2,3-dihydroxy-isovalerate. In the isomerase reaction, S2AL is rearranged via a Mg-dependent methyl migration to produce 3-hydroxy-3-methyl-2-ketobutyrate (HMKB). In the reductase reaction, this 2-ketoacid undergoes a metal-dependent reduction by NADPH to yield (R)-2,3-dihydroxy-isovalerate. The polypeptide is Ketol-acid reductoisomerase (NADP(+)) (Chlorobium phaeovibrioides (strain DSM 265 / 1930) (Prosthecochloris vibrioformis (strain DSM 265))).